A 321-amino-acid chain; its full sequence is Malate dehydrogenase (321 aa).

Residues 11-16 (GSGNIG) and aspartate 35 contribute to the NAD(+) site. Substrate-binding residues include arginine 84 and arginine 90. Residues asparagine 97 and 120–122 (ITN) each bind NAD(+). Substrate-binding residues include asparagine 122 and arginine 153. Histidine 177 (proton acceptor) is an active-site residue.

Belongs to the LDH/MDH superfamily. MDH type 3 family.

It carries out the reaction (S)-malate + NAD(+) = oxaloacetate + NADH + H(+). In terms of biological role, catalyzes the reversible oxidation of malate to oxaloacetate. This Rickettsia peacockii (strain Rustic) protein is Malate dehydrogenase.